We begin with the raw amino-acid sequence, 607 residues long: Chaperone protein DnaK (607 aa).

Position 174 is a phosphothreonine; by autocatalysis (Thr-174). Residues 577 to 607 (GYTASGPQGGPNPGGGQSGPDGNVNTDYKVY) form a disordered region. A compositionally biased stretch (gly residues) spans 583–595 (PQGGPNPGGGQSG).

The protein belongs to the heat shock protein 70 family.

Its function is as follows. Acts as a chaperone. This is Chaperone protein DnaK from Caldicellulosiruptor bescii (strain ATCC BAA-1888 / DSM 6725 / KCTC 15123 / Z-1320) (Anaerocellum thermophilum).